The sequence spans 351 residues: S-adenosylmethionine:tRNA ribosyltransferase-isomerase (351 aa).

The protein belongs to the QueA family. Monomer.

Its subcellular location is the cytoplasm. It catalyses the reaction 7-aminomethyl-7-carbaguanosine(34) in tRNA + S-adenosyl-L-methionine = epoxyqueuosine(34) in tRNA + adenine + L-methionine + 2 H(+). The protein operates within tRNA modification; tRNA-queuosine biosynthesis. Its function is as follows. Transfers and isomerizes the ribose moiety from AdoMet to the 7-aminomethyl group of 7-deazaguanine (preQ1-tRNA) to give epoxyqueuosine (oQ-tRNA). The protein is S-adenosylmethionine:tRNA ribosyltransferase-isomerase of Fusobacterium nucleatum subsp. nucleatum (strain ATCC 25586 / DSM 15643 / BCRC 10681 / CIP 101130 / JCM 8532 / KCTC 2640 / LMG 13131 / VPI 4355).